We begin with the raw amino-acid sequence, 313 residues long: Pyrimidine-specific ribonucleoside hydrolase RihB (313 aa).

The Proton acceptor role is filled by aspartate 11. Aspartate 11, aspartate 16, and valine 124 together coordinate Ca(2+). Residues glutamine 227 and histidine 239 each contribute to the substrate site. Position 240 (aspartate 240) interacts with Ca(2+).

This sequence belongs to the IUNH family. RihB subfamily. As to quaternary structure, homotetramer. Ca(2+) serves as cofactor.

It carries out the reaction a pyrimidine ribonucleoside + H2O = a pyrimidine nucleobase + D-ribose. Hydrolyzes cytidine or uridine to ribose and cytosine or uracil, respectively. Has a clear preference for cytidine over uridine. Strictly specific for ribonucleosides. The protein is Pyrimidine-specific ribonucleoside hydrolase RihB of Escherichia coli O9:H4 (strain HS).